A 307-amino-acid chain; its full sequence is Small ribosomal subunit biogenesis GTPase RsgA (307 aa).

The interval 1 to 21 is disordered; that stretch reads MPSEHPFSDGISTPNPKETMN. Residues 10 to 21 are compositionally biased toward polar residues; sequence GISTPNPKETMN. Residues 85 to 242 form the CP-type G domain; it reads RQDAWKTKLI…LIDSPGLQEF (158 aa). Residues 135-138 and 184-192 contribute to the GTP site; these read NKAD and GQSGMGKST. 4 residues coordinate Zn(2+): C266, C271, H273, and C279.

Belongs to the TRAFAC class YlqF/YawG GTPase family. RsgA subfamily. In terms of assembly, monomer. Associates with 30S ribosomal subunit, binds 16S rRNA. Zn(2+) serves as cofactor.

It localises to the cytoplasm. Functionally, one of several proteins that assist in the late maturation steps of the functional core of the 30S ribosomal subunit. Helps release RbfA from mature subunits. May play a role in the assembly of ribosomal proteins into the subunit. Circularly permuted GTPase that catalyzes slow GTP hydrolysis, GTPase activity is stimulated by the 30S ribosomal subunit. The sequence is that of Small ribosomal subunit biogenesis GTPase RsgA from Neisseria gonorrhoeae (strain ATCC 700825 / FA 1090).